The chain runs to 489 residues: Ulvan Lyase-PL25 (489 aa).

Residues 1–31 (MNLNKTLRKNSPSGYKALLTFSIICGLMATG) form the signal peptide. Residue cysteine 32 is the site of N-palmitoyl cysteine attachment. Cysteine 32 carries the S-diacylglycerol cysteine lipid modification. Residues asparagine 60 and asparagine 122 each contribute to the substrate site. Histidine 123 acts as the Proton donor in catalysis. Lysine 125 and histidine 143 together coordinate substrate. Tyrosine 188 serves as the catalytic Proton acceptor. Positions 204, 208, and 246 each coordinate substrate. Residue histidine 208 participates in Zn(2+) binding. 3 residues coordinate Zn(2+): histidine 264, cysteine 266, and histidine 278. Histidine 278 contacts substrate.

The protein belongs to the polysaccharide lyase 25 family.

It is found in the cell membrane. Functionally, ulvan lyase involved in ulvan degradation. Ulvan is the main polysaccharide component of the Ulvales (green seaweed) cell wall. It is composed of disaccharide building blocks comprising 3-sulfated rhamnose (Rha3S) linked to D-glucuronic acid (GlcA), L-iduronic acid (IduA), or D-xylose (Xyl). Ulvan lyase catalyzes the endolytic cleavage of the glycosidic bond between Rha3S and the uronic acids GlcA or IduA, producing oligosaccharides that have unsaturated 4-deoxy-L-threo-hex-4-enopyranosiduronic acid (deltaUA) at the non-reducing end. This results eventually in the degradation of the ulvan polysaccharide into deltaUA-Rha3S disaccharides and deltaUA-Rha3S-Xyl-Rha3S tetrasaccharides. The polypeptide is Ulvan Lyase-PL25 (Pseudoalteromonas sp. (strain PLSV)).